The following is a 99-amino-acid chain: MMNMQNMMKQAQKLQKQMEKSQAELAATTFTGKSAQDLVVAELTGDKKVVNITFADAVVDPDDVETLQDMTVQALNDALGQIDEATKKSMGAFAGKLPF.

Belongs to the YbaB/EbfC family. In terms of assembly, homodimer.

Its subcellular location is the cytoplasm. It is found in the nucleoid. Binds to DNA and alters its conformation. May be involved in regulation of gene expression, nucleoid organization and DNA protection. The sequence is that of Nucleoid-associated protein str1598 from Streptococcus thermophilus (strain CNRZ 1066).